Here is an 806-residue protein sequence, read N- to C-terminus: MGDILAYEADLLGLVKEFLNFGEFQETLECFSKECKIKGKLLPRTSGSSLRESKTLLIQKDLITAFEDGDIKEFFALWQEHIPVETQNTNPVAQKLEFYLQIHFAIFPLKQSQGRIDRVDCEERISHFKTYLETSGAALSQTTEFLPFYALPFVPNPAAHPSFKEIFQESWEAELKMRLEKFLSVILKAASTPKLITLYKESLHNNQEQLQQLQQQLMETEHKARTYKKCFNKMQSDYHNLIGVTADLVDSLEATINGKLITPEYLQSVCTRLFSAQMKQSSAQSIDFTRPGTASSMLRASIAPLKQQEVPLFPSLDYEKLKKDLVFGNDRLKAFILQALRWRLTRSQPGEQRNTVLQAYISNDLLDCQHNEQKNVLILLRSPSEVVRQYTALLIDVCASLGYGRVYLSQNPRLLHSLVEAWKAEEKESIARETVLGILQKLSLRRSMQSAMIKDDLIFWLVRELEDPDHLSDYALQYTIALFMNLCLRTAGRKLCSRDADHVLKVLSDLLGHENHEIRSYVNGALYSILAVPSIREEARSMGMEEILRWYIREGNPDMNCHIEFIIRQLNSEDKFDESVESDDEEEEKDDEEDEDALEADLDKDEIIHAQSGELSGEKLLTTDYLGIMTNSFKVKKRMFAGILQSADEPLQRPVTPSSHRAMNTVRKNSNSPSPLTNTFKSSQANKMSLSSSRPPTRSGSRASSSDSIDSEASRLFSPNSLTDHRGAMSPTSPRILDLGMEKNIVQNSSKAWLPRSPEVQNATSRKTRTPTIAPQFSQSGPQQTSYSSSAGSSTRSRQSTQSYRK.

A LisH domain is found at Tyr-7–Gly-39. Residues Lys-194–Cys-230 adopt a coiled-coil conformation. Disordered regions lie at residues Phe-576 to Lys-604, Pro-650 to Ile-736, and Asn-748 to Lys-806. Residues Ser-579 to Lys-604 show a composition bias toward acidic residues. Residues Val-655–Met-688 show a composition bias toward polar residues. The segment covering Ser-689 to Ser-708 has biased composition (low complexity). Polar residues predominate over residues Glu-759 to Pro-782. Low complexity predominate over residues Gln-783–Lys-806.

It is found in the cytoplasm. The protein resides in the cytoskeleton. The protein localises to the cilium basal body. It localises to the cell projection. Its subcellular location is the cilium. It is found in the microtubule organizing center. The protein resides in the centrosome. The protein localises to the centriole. Functionally, involved in ciliogenesis. It is required for appropriate acetylation and polyglutamylation of ciliary microtubules, and regulation of cilium length. Acts as a positive regulator of hedgehog (Hh)signaling. This chain is LisH domain-containing protein ARMC9 (armc9), found in Xenopus laevis (African clawed frog).